Reading from the N-terminus, the 325-residue chain is MTASSVLLHTGQKMPLIGLGTWKSEPGQVKAAIKYALSVGYRHIDCASVYGNETEIGEALKESVGAGKAVPREELFVTSKLWNTKHHPEDVEPAVRKTLADLQLEYLDLYLMHWPYAFERGDNPFPKNADGTVKYDSTHYKETWKALEALVAKGLVKALGLSNFSSRQIDDVLSVASVRPAVLQVECHPYLAQNELIAHCQARGLEVTAYSPLGSSDRAWRHPDEPVLLEEPVVLALAEKHGRSPAQILLRWQVQRKVICIPKSITPSRILQNIQVFDFTFSPEEMKQLDALNKNWRYIVPMITVDGKRVPRDAGHPLYPFNDPY.

At T2 the chain carries N-acetylthreonine. The residue at position 4 (S4) is a Phosphoserine. NADP(+) contacts are provided by residues 11 to 20 (GQKMPLIGLG), T21, and W22. N-linked (Glc) (glycation) lysine glycosylation is present at K23. S38 carries the phosphoserine modification. NADP(+) is bound at residue D45. Y50 acts as the Proton donor in catalysis. N-linked (Glc) (glycation) lysine glycosylation is found at K68 and K85. N6-acetyllysine; alternate is present on K127. K127 carries the post-translational modification N6-succinyllysine; alternate. An N-linked (Glc) (glycation) lysine glycan is attached at K141. K145 carries the N6-succinyllysine modification. N-linked (Glc) (glycation) lysine glycosylation is present at K153. Residues S162, N163, S211, L213, S215, S216, K263, S264, I265, T266, R269, Q272, and N273 each coordinate NADP(+). S211 carries the phosphoserine modification.

This sequence belongs to the aldo/keto reductase family. Monomer. In terms of tissue distribution, widely expressed.

It localises to the cytoplasm. The protein resides in the cytosol. The protein localises to the apical cell membrane. The enzyme catalyses a primary alcohol + NADP(+) = an aldehyde + NADPH + H(+). The catalysed reaction is L-gulonate + NADP(+) = aldehydo-D-glucuronate + NADPH + H(+). It carries out the reaction L-gulono-1,4-lactone + NADP(+) = D-glucurono-3,6-lactone + NADPH + H(+). It catalyses the reaction allyl alcohol + NADP(+) = acrolein + NADPH + H(+). The enzyme catalyses glycerol + NADP(+) = D-glyceraldehyde + NADPH + H(+). The catalysed reaction is glycerol + NADP(+) = L-glyceraldehyde + NADPH + H(+). It carries out the reaction hydroxyacetone + NADP(+) = methylglyoxal + NADPH + H(+). It catalyses the reaction 3-deoxyfructose + NADP(+) = 3-deoxyglucosone + NADPH + H(+). The enzyme catalyses (R)-mevalonate + NADP(+) = (R)-mevaldate + NADPH + H(+). The catalysed reaction is pyridine 3-methanol + NADP(+) = pyridine-3-carbaldehyde + NADPH + H(+). It carries out the reaction S-nitroso-CoA + NADPH + H(+) = sulfinamide-CoA + NADP(+). It catalyses the reaction S-nitrosoglutathione + NADPH + H(+) = S-(hydroxysulfenamide)glutathione + NADP(+). Its function is as follows. Catalyzes the NADPH-dependent reduction of a wide variety of carbonyl-containing compounds to their corresponding alcohols. Displays enzymatic activity towards endogenous metabolites such as aromatic and aliphatic aldehydes, ketones, monosaccharides and bile acids. Plays an important role in ascorbic acid biosynthesis by catalyzing the reduction of D-glucuronic acid and D-glucurono-gamma-lactone. Functions as a detoxifiying enzyme by reducing a range of toxic aldehydes. Reduces methylglyoxal and 3-deoxyglucosone, which are present at elevated levels under hyperglycemic conditions and are cytotoxic. Involved also in the detoxification of lipid-derived aldehydes like acrolein. Plays a role in the activation of procarcinogens, such as polycyclic aromatic hydrocarbon trans-dihydrodiols, and in the metabolism of various xenobiotics and drugs. Also acts as an inhibitor of protein S-nitrosylation by mediating degradation of S-nitroso-coenzyme A (S-nitroso-CoA), a cofactor required to S-nitrosylate proteins. S-nitroso-CoA reductase activity is involved in reprogramming intermediary metabolism in renal proximal tubules, notably by inhibiting protein S-nitrosylation of isoform 2 of PKM (PKM2). Also acts as a S-nitroso-glutathione reductase by catalyzing the NADPH-dependent reduction of S-nitrosoglutathione. Displays no reductase activity towards retinoids. The protein is Aldo-keto reductase family 1 member A1 (Akr1a1) of Rattus norvegicus (Rat).